The primary structure comprises 84 residues: Cell division topological specificity factor (84 aa).

The protein belongs to the MinE family.

Prevents the cell division inhibition by proteins MinC and MinD at internal division sites while permitting inhibition at polar sites. This ensures cell division at the proper site by restricting the formation of a division septum at the midpoint of the long axis of the cell. This chain is Cell division topological specificity factor, found in Pseudomonas syringae pv. tomato (strain ATCC BAA-871 / DC3000).